A 340-amino-acid polypeptide reads, in one-letter code: Fructoselysine 6-phosphate deglycase (340 aa).

2 consecutive SIS domains span residues 35 to 169 (IVEE…RLAP) and 201 to 331 (LGEL…PDER).

In terms of assembly, homododecamer.

The catalysed reaction is N(6)-(6-phospho-D-fructosyl)-L-lysine + H2O = D-glucose 6-phosphate + L-lysine. It functions in the pathway carbohydrate metabolism; fructoselysine degradation; D-glucose 6-phosphate and lysine from fructoselysine: step 2/2. Its activity is regulated as follows. Strongly inhibited by ZnCl(2). Functionally, catalyzes the reversible conversion of fructoselysine 6-phosphate to glucose 6-phosphate and lysine. Functions in a fructoselysine degradation pathway that allows E.coli to grow on fructoselysine or psicoselysine. The sequence is that of Fructoselysine 6-phosphate deglycase from Escherichia coli (strain K12).